A 197-amino-acid chain; its full sequence is MKILAMDERREELSAKSTVQNVKISEAPILDGKVNNEDSHMEIDQPEGSMEEDDHRQVKEKNTSENSVEQKRGRRMFGALLGTLGKFQQESEREQKSARKVKRAELEEKLAKRREQELQELEKQEKIEAEILESRLQEQRKVALDELELDRNDLKKVLDNKKSYYLRTKTQPSLFYRPYYLLPSQRTQLEQMKSEAP.

Residues 30–73 (LDGKVNNEDSHMEIDQPEGSMEEDDHRQVKEKNTSENSVEQKRG) form a disordered region. 2 stretches are compositionally biased toward basic and acidic residues: residues 34–43 (VNNEDSHMEI) and 53–71 (DDHR…VEQK).

This sequence belongs to the pinin family.

It is found in the nucleus. It localises to the cytoplasm. In terms of biological role, transcriptional activator that may participate in the regulation of mRNA splicing. The sequence is that of Pinin homolog 1 (pnn1) from Schizosaccharomyces pombe (strain 972 / ATCC 24843) (Fission yeast).